The primary structure comprises 95 residues: MAFKFNAEVRTAQGKGASRRLRHNGQIPAIVYGGSEEPVSIILNHDELNNAQAHESFYSEVITLVIGGKEVAVKVQAMQRHPFKPKLVHIDFKRA.

Belongs to the bacterial ribosomal protein bL25 family. In terms of assembly, part of the 50S ribosomal subunit; part of the 5S rRNA/L5/L18/L25 subcomplex. Contacts the 5S rRNA. Binds to the 5S rRNA independently of L5 and L18.

This is one of the proteins that binds to the 5S RNA in the ribosome where it forms part of the central protuberance. This chain is Large ribosomal subunit protein bL25, found in Haemophilus influenzae (strain PittGG).